Here is a 465-residue protein sequence, read N- to C-terminus: Hexokinase-4 (465 aa).

Positions 10 to 454 constitute a Hexokinase domain; it reads AAKKEKVEQI…SGRGAALVSA (445 aa). The tract at residues 67-203 is hexokinase small subdomain; sequence EGSEVGDFLS…DFEMDVVAMV (137 aa). ATP is bound at residue 78–83; that stretch reads DLGGTN. Substrate-binding positions include 151–152, 168–169, and 204–205; these read SF, TK, and ND. A hexokinase large subdomain region spans residues 204 to 443; that stretch reads NDTVATMISC…CEITFIESEE (240 aa). Residue T228 participates in ATP binding. N231, E256, and E290 together coordinate substrate. Residues 295 to 296, 332 to 336, and 411 to 415 each bind ATP; these read GK, TRFVS, and SVYKL.

The protein belongs to the hexokinase family. As to quaternary structure, monomer. Interacts with MIDN; the interaction occurs preferentially at low glucose levels and results in inhibition of hexokinase activity. Interacts with GCKR; leading to sequestration in the nucleus.

It is found in the cytoplasm. It localises to the nucleus. Its subcellular location is the mitochondrion. The catalysed reaction is a D-hexose + ATP = a D-hexose 6-phosphate + ADP + H(+). It carries out the reaction D-fructose + ATP = D-fructose 6-phosphate + ADP + H(+). The enzyme catalyses D-glucose + ATP = D-glucose 6-phosphate + ADP + H(+). It catalyses the reaction D-mannose + ATP = D-mannose 6-phosphate + ADP + H(+). Its pathway is carbohydrate metabolism; hexose metabolism. It functions in the pathway carbohydrate degradation; glycolysis; D-glyceraldehyde 3-phosphate and glycerone phosphate from D-glucose: step 1/4. With respect to regulation, subject to allosteric regulation. Low glucose and high fructose-6-phosphate triggers association with the inhibitor GCKR followed by sequestration in the nucleus. Its function is as follows. Catalyzes the phosphorylation of hexose, such as D-glucose, D-fructose and D-mannose, to hexose 6-phosphate (D-glucose 6-phosphate, D-fructose 6-phosphate and D-mannose 6-phosphate, respectively). Compared to other hexokinases, has a weak affinity for D-glucose, and is effective only when glucose is abundant. Mainly expressed in pancreatic beta cells and the liver and constitutes a rate-limiting step in glucose metabolism in these tissues. Since insulin secretion parallels glucose metabolism and the low glucose affinity of GCK ensures that it can change its enzymatic activity within the physiological range of glucose concentrations, GCK acts as a glucose sensor in the pancreatic beta cell. In pancreas, plays an important role in modulating insulin secretion. In liver, helps to facilitate the uptake and conversion of glucose by acting as an insulin-sensitive determinant of hepatic glucose usage. Required to provide D-glucose 6-phosphate for the synthesis of glycogen. Mediates the initial step of glycolysis by catalyzing phosphorylation of D-glucose to D-glucose 6-phosphate. The chain is Hexokinase-4 from Homo sapiens (Human).